A 584-amino-acid chain; its full sequence is POTE ankyrin domain family member D (584 aa).

ANK repeat units lie at residues 172 to 201, 205 to 234, 238 to 267, 271 to 300, 304 to 333, and 337 to 366; these read EKRT…QLNV, KKRT…DRNI, YGNT…DIES, CGLT…NLNV, YGRT…DVSS, and SGQT…KQML. The tract at residues 369–502 is disordered; the sequence is SSENSNPEQD…ILTNKQKQIE (134 aa). Composition is skewed to basic and acidic residues over residues 377–392, 401–412, and 466–481; these read QDLK…RLKV, MSQEPEINKDCD, and EEYH…KQLS. The segment covering 482 to 498 has biased composition (polar residues); the sequence is EEQNTGISQDEILTNKQ. A coiled-coil region spans residues 494 to 583; that stretch reads LTNKQKQIEV…LNEEALTKTN (90 aa).

It belongs to the POTE family. In terms of tissue distribution, expressed in prostate, ovary, testis, placenta and prostate cancer cell lines. Localizes to basal and terminal prostate epithelial cells.

Its subcellular location is the cell membrane. This Homo sapiens (Human) protein is POTE ankyrin domain family member D (POTED).